The chain runs to 311 residues: Methionyl-tRNA formyltransferase (311 aa).

(6S)-5,6,7,8-tetrahydrofolate is bound at residue 109-112; the sequence is SLLP.

It belongs to the Fmt family.

The enzyme catalyses L-methionyl-tRNA(fMet) + (6R)-10-formyltetrahydrofolate = N-formyl-L-methionyl-tRNA(fMet) + (6S)-5,6,7,8-tetrahydrofolate + H(+). Functionally, attaches a formyl group to the free amino group of methionyl-tRNA(fMet). The formyl group appears to play a dual role in the initiator identity of N-formylmethionyl-tRNA by promoting its recognition by IF2 and preventing the misappropriation of this tRNA by the elongation apparatus. The sequence is that of Methionyl-tRNA formyltransferase from Marinobacter nauticus (strain ATCC 700491 / DSM 11845 / VT8) (Marinobacter aquaeolei).